Reading from the N-terminus, the 713-residue chain is Polyribonucleotide nucleotidyltransferase (713 aa).

The Mg(2+) site is built by aspartate 498 and aspartate 504. Residues 565–631 (PRILSLKVPV…RIEDLTREAK (67 aa)) form the KH domain. The 69-residue stretch at 633-701 (GEIYEGTVTR…ERGKIDLIRP (69 aa)) folds into the S1 motif domain.

The protein belongs to the polyribonucleotide nucleotidyltransferase family. The cofactor is Mg(2+).

Its subcellular location is the cytoplasm. The enzyme catalyses RNA(n+1) + phosphate = RNA(n) + a ribonucleoside 5'-diphosphate. Involved in mRNA degradation. Catalyzes the phosphorolysis of single-stranded polyribonucleotides processively in the 3'- to 5'-direction. This is Polyribonucleotide nucleotidyltransferase from Thermus thermophilus.